A 98-amino-acid chain; its full sequence is Integration host factor subunit beta (98 aa).

Belongs to the bacterial histone-like protein family. As to quaternary structure, heterodimer of an alpha and a beta chain.

In terms of biological role, this protein is one of the two subunits of integration host factor, a specific DNA-binding protein that functions in genetic recombination as well as in transcriptional and translational control. This Teredinibacter turnerae (strain ATCC 39867 / T7901) protein is Integration host factor subunit beta.